The chain runs to 295 residues: Acetylglutamate kinase (295 aa).

Residues 66–67 (GG), Arg88, and Asn193 each bind substrate.

This sequence belongs to the acetylglutamate kinase family. ArgB subfamily.

It localises to the cytoplasm. It catalyses the reaction N-acetyl-L-glutamate + ATP = N-acetyl-L-glutamyl 5-phosphate + ADP. Its pathway is amino-acid biosynthesis; L-arginine biosynthesis; N(2)-acetyl-L-ornithine from L-glutamate: step 2/4. Catalyzes the ATP-dependent phosphorylation of N-acetyl-L-glutamate. This Afipia carboxidovorans (strain ATCC 49405 / DSM 1227 / KCTC 32145 / OM5) (Oligotropha carboxidovorans) protein is Acetylglutamate kinase.